A 248-amino-acid polypeptide reads, in one-letter code: 2,3-bisphosphoglycerate-dependent phosphoglycerate mutase (248 aa).

Substrate is bound by residues 8-15, 21-22, R60, 87-90, K98, 114-115, and 183-184; these read RHGESIWN, TG, EKHY, RR, and GN. H9 (tele-phosphohistidine intermediate) is an active-site residue. E87 serves as the catalytic Proton donor/acceptor.

This sequence belongs to the phosphoglycerate mutase family. BPG-dependent PGAM subfamily.

It catalyses the reaction (2R)-2-phosphoglycerate = (2R)-3-phosphoglycerate. The protein operates within carbohydrate degradation; glycolysis; pyruvate from D-glyceraldehyde 3-phosphate: step 3/5. Catalyzes the interconversion of 2-phosphoglycerate and 3-phosphoglycerate. The polypeptide is 2,3-bisphosphoglycerate-dependent phosphoglycerate mutase (Parabacteroides distasonis (strain ATCC 8503 / DSM 20701 / CIP 104284 / JCM 5825 / NCTC 11152)).